Reading from the N-terminus, the 214-residue chain is Outer-membrane lipoprotein LolB (214 aa).

A signal peptide spans 1 to 25 (MNNLKRFTKSIFSCIALSGLLFLGG). Cys-26 is lipidated: N-palmitoyl cysteine. Cys-26 carries the S-diacylglycerol cysteine lipid modification.

Belongs to the LolB family. As to quaternary structure, monomer.

The protein localises to the cell outer membrane. Plays a critical role in the incorporation of lipoproteins in the outer membrane after they are released by the LolA protein. The polypeptide is Outer-membrane lipoprotein LolB (Shewanella oneidensis (strain ATCC 700550 / JCM 31522 / CIP 106686 / LMG 19005 / NCIMB 14063 / MR-1)).